The following is a 59-amino-acid chain: Large ribosomal subunit protein uL30 (59 aa).

This sequence belongs to the universal ribosomal protein uL30 family. In terms of assembly, part of the 50S ribosomal subunit.

This Lactococcus lactis subsp. lactis (strain IL1403) (Streptococcus lactis) protein is Large ribosomal subunit protein uL30.